Reading from the N-terminus, the 159-residue chain is NADH-quinone oxidoreductase subunit B (159 aa).

C32, C33, C97, and C126 together coordinate [4Fe-4S] cluster.

Belongs to the complex I 20 kDa subunit family. NDH-1 is composed of 14 different subunits. Subunits NuoB, C, D, E, F, and G constitute the peripheral sector of the complex. [4Fe-4S] cluster is required as a cofactor.

The protein resides in the cell inner membrane. It carries out the reaction a quinone + NADH + 5 H(+)(in) = a quinol + NAD(+) + 4 H(+)(out). Functionally, NDH-1 shuttles electrons from NADH, via FMN and iron-sulfur (Fe-S) centers, to quinones in the respiratory chain. The immediate electron acceptor for the enzyme in this species is believed to be ubiquinone. Couples the redox reaction to proton translocation (for every two electrons transferred, four hydrogen ions are translocated across the cytoplasmic membrane), and thus conserves the redox energy in a proton gradient. The polypeptide is NADH-quinone oxidoreductase subunit B (Helicobacter pylori (strain J99 / ATCC 700824) (Campylobacter pylori J99)).